The sequence spans 604 residues: Elongation factor 4 (604 aa).

Residues 2-184 (DHIRNFSIIA…AVITRMPAPR (183 aa)) form the tr-type G domain. GTP-binding positions include 14 to 19 (DHGKST) and 131 to 134 (NKMD).

It belongs to the TRAFAC class translation factor GTPase superfamily. Classic translation factor GTPase family. LepA subfamily.

The protein localises to the cell inner membrane. The enzyme catalyses GTP + H2O = GDP + phosphate + H(+). Functionally, required for accurate and efficient protein synthesis under certain stress conditions. May act as a fidelity factor of the translation reaction, by catalyzing a one-codon backward translocation of tRNAs on improperly translocated ribosomes. Back-translocation proceeds from a post-translocation (POST) complex to a pre-translocation (PRE) complex, thus giving elongation factor G a second chance to translocate the tRNAs correctly. Binds to ribosomes in a GTP-dependent manner. This chain is Elongation factor 4, found in Methylibium petroleiphilum (strain ATCC BAA-1232 / LMG 22953 / PM1).